The chain runs to 376 residues: Chaperone protein DnaJ (376 aa).

The J domain maps to 5 to 70; the sequence is DFYEVLGVGR…DKKAAYDQFG (66 aa). The segment at 132-210 adopts a CR-type zinc-finger fold; the sequence is GLSKELRIPT…CHGEGRVEKS (79 aa). Zn(2+) contacts are provided by cysteine 145, cysteine 148, cysteine 162, cysteine 165, cysteine 184, cysteine 187, cysteine 198, and cysteine 201. CXXCXGXG motif repeat units follow at residues 145–152, 162–169, 184–191, and 198–205; these read CEPCDGSG, CGTCHGQG, CPTCHGRG, and CNKCHGEG.

The protein belongs to the DnaJ family. As to quaternary structure, homodimer. Zn(2+) is required as a cofactor.

It localises to the cytoplasm. Participates actively in the response to hyperosmotic and heat shock by preventing the aggregation of stress-denatured proteins and by disaggregating proteins, also in an autonomous, DnaK-independent fashion. Unfolded proteins bind initially to DnaJ; upon interaction with the DnaJ-bound protein, DnaK hydrolyzes its bound ATP, resulting in the formation of a stable complex. GrpE releases ADP from DnaK; ATP binding to DnaK triggers the release of the substrate protein, thus completing the reaction cycle. Several rounds of ATP-dependent interactions between DnaJ, DnaK and GrpE are required for fully efficient folding. Also involved, together with DnaK and GrpE, in the DNA replication of plasmids through activation of initiation proteins. This chain is Chaperone protein DnaJ, found in Shewanella piezotolerans (strain WP3 / JCM 13877).